Reading from the N-terminus, the 495-residue chain is Probable cytosol aminopeptidase (495 aa).

The Mn(2+) site is built by Lys-264 and Asp-269. Lys-276 is a catalytic residue. Mn(2+) contacts are provided by Asp-287, Asp-346, and Glu-348. Arg-350 is an active-site residue.

Belongs to the peptidase M17 family. Mn(2+) is required as a cofactor.

It is found in the cytoplasm. The catalysed reaction is Release of an N-terminal amino acid, Xaa-|-Yaa-, in which Xaa is preferably Leu, but may be other amino acids including Pro although not Arg or Lys, and Yaa may be Pro. Amino acid amides and methyl esters are also readily hydrolyzed, but rates on arylamides are exceedingly low.. The enzyme catalyses Release of an N-terminal amino acid, preferentially leucine, but not glutamic or aspartic acids.. Its function is as follows. Presumably involved in the processing and regular turnover of intracellular proteins. Catalyzes the removal of unsubstituted N-terminal amino acids from various peptides. In Geotalea uraniireducens (strain Rf4) (Geobacter uraniireducens), this protein is Probable cytosol aminopeptidase.